Here is a 172-residue protein sequence, read N- to C-terminus: Allergen Bos d 2 (172 aa).

A signal peptide spans 1-16 (MKAVFLTLLFGLVCTA). Gln17 carries the pyrrolidone carboxylic acid modification. 2 disulfides stabilise this stretch: Cys60–Cys64 and Cys79–Cys170.

The protein belongs to the calycin superfamily. Lipocalin family. Found exclusively in skin. Produced in sweat glands and transported to the skin surface.

It is found in the secreted. In terms of biological role, probable pheromone carrier. In Bos taurus (Bovine), this protein is Allergen Bos d 2.